The following is a 573-amino-acid chain: E3 ubiquitin-protein ligase TRIM23 (573 aa).

An RING-type; degenerate zinc finger spans residues 31 to 76; sequence CGVCEDVFSLQGDKVPRLLLCGHTVCHDCLTRLPLHGRAIRCPFDR. Residues 122–168 form a B box-type; degenerate zinc finger; that stretch reads ESIIRCDEDEAHVASVYCTVCATHLCSECSQVTHSTKTLAKHRRVPL. Residues 351–378 adopt a coiled-coil conformation; it reads RVVLAKQEITRLLETLQKQQQQFTEVAD. Positions 390 to 573 are ARF-like; sequence FTKDNRVYHG…LVAAGVLDVA (184 aa). GTP-binding positions include 411-418, 454-458, and 513-516; these read LDGAGKTT, VGGKH, and KQDV.

This sequence in the C-terminal section; belongs to the small GTPase superfamily. Arf family. As to quaternary structure, homodimer. Interacts with PSCD1. Interacts with UBE2D2. Interacts with TBK1 (via N-terminal kinase domain) and p62/SQSTM1.

It is found in the cytoplasm. Its subcellular location is the endomembrane system. It localises to the golgi apparatus membrane. The protein localises to the lysosome membrane. The enzyme catalyses S-ubiquitinyl-[E2 ubiquitin-conjugating enzyme]-L-cysteine + [acceptor protein]-L-lysine = [E2 ubiquitin-conjugating enzyme]-L-cysteine + N(6)-ubiquitinyl-[acceptor protein]-L-lysine.. Its pathway is protein modification; protein ubiquitination. In terms of biological role, acts as an E3 ubiquitin-protein ligase. Plays an essential role in autophagy activation during viral infection. Mechanistically, activates TANK-binding kinase 1/TBK1 by facilitating its dimerization and ability to phosphorylate the selective autophagy receptor SQSTM1. In order to achieve this function, TRIM23 mediates 'Lys-27'-linked auto-ubiquitination of its ADP-ribosylation factor (ARF) domain to induce its GTPase activity and its recruitment to autophagosomes. This chain is E3 ubiquitin-protein ligase TRIM23 (Trim23), found in Rattus norvegicus (Rat).